A 312-amino-acid polypeptide reads, in one-letter code: Ribosomal RNA small subunit methyltransferase H (312 aa).

S-adenosyl-L-methionine-binding positions include 32-34 (AGH), D52, F79, D100, and Q107.

Belongs to the methyltransferase superfamily. RsmH family.

The protein resides in the cytoplasm. It catalyses the reaction cytidine(1402) in 16S rRNA + S-adenosyl-L-methionine = N(4)-methylcytidine(1402) in 16S rRNA + S-adenosyl-L-homocysteine + H(+). Its function is as follows. Specifically methylates the N4 position of cytidine in position 1402 (C1402) of 16S rRNA. The sequence is that of Ribosomal RNA small subunit methyltransferase H from Listeria monocytogenes serovar 1/2a (strain ATCC BAA-679 / EGD-e).